Here is a 582-residue protein sequence, read N- to C-terminus: Pescadillo homolog (582 aa).

Residues 277–329 (LSALSASLARVVATVEEEENQLDNFPTEEEDQENMQAREKEQKEQEAQKRLFE) are a coiled coil. Acidic residues predominate over residues 294-309 (EENQLDNFPTEEEDQE). The segment at 294–317 (EENQLDNFPTEEEDQENMQAREKE) is disordered. The BRCT domain maps to 323–416 (AQKRLFEGLK…MRLPVEDYFL (94 aa)). The segment covering 445–454 (ALQRGEKPVQ) has biased composition (basic and acidic residues). 2 disordered regions span residues 445–511 (ALQR…ETGS) and 554–582 (REVNKLTAKRKAHEDASKAQKKQKKAKKQ). The segment covering 455 to 477 (EEDEEEEDEDEEEDDDVDDEEFT) has biased composition (acidic residues). Basic and acidic residues predominate over residues 478–490 (EEKNLKKMEDTRA). The stretch at 517–582 (RLEQEEKAEE…QKKQKKAKKQ (66 aa)) forms a coiled coil. Residues 572 to 582 (AQKKQKKAKKQ) are compositionally biased toward basic residues.

The protein belongs to the pescadillo family. As to quaternary structure, component of the PeBoW complex, composed of bop1, pes1 and wdr12. The complex is held together by bop1, which interacts with pes1 via its N-terminal domain and with wdr12 via a high-affinity interaction between the seven-bladed beta-propeller domains of the 2 proteins. The PeBoW complex associates with the 66S pre-ribosome.

The protein localises to the nucleus. Its subcellular location is the nucleolus. The protein resides in the nucleoplasm. Component of the PeBoW complex, which is required for maturation of 28S and 5.8S ribosomal RNAs and formation of the 60S ribosome. The protein is Pescadillo homolog (pes1) of Salmo salar (Atlantic salmon).